The primary structure comprises 318 residues: Taste receptor type 2 member 14 (318 aa).

Residues 1–7 (MGGVIKN) are Extracellular-facing. The chain crosses the membrane as a helical span at residues 8 to 28 (ISTFVLIVEFIIGNLGNSFIA). Over 29–55 (LVNCIDWVKRRKISLVDQLLTALAISR) the chain is Cytoplasmic. A helical membrane pass occupies residues 56–76 (ISLVWLIFGSWCVSAFFPALF). Topologically, residues 77 to 87 (ATEKMFRMLTN) are extracellular. Positions 86 and 89 each coordinate cholesterol. A helical membrane pass occupies residues 88–108 (IWAVTNHFSVWLATGLGTFYF). Topologically, residues 109-129 (LKIANFSNSIFIYLKWRVKKV) are cytoplasmic. A helical transmembrane segment spans residues 130–150 (VLVLLLVTSVFLFLNIALINI). The Extracellular segment spans residues 151-184 (HINASINGYGGNKTCSSDSNDFTRFSSLIALTSS). N-linked (GlcNAc...) asparagine glycans are attached at residues Asn153 and Asn162. Ala180 contacts cholesterol. Residues 185–205 (VFIFIPFILSLAIFLLLTFSL) traverse the membrane as a helical segment. Residues 206–232 (WKHCKKMQHTVKASGDASTKAHRGVMQ) lie on the Cytoplasmic side of the membrane. The helical transmembrane segment at 233–253 (TVIAFLLLYPIFSLSFFIAVW) threads the bilayer. Residues 254–261 (TSGWLEEN) are Extracellular-facing. A helical transmembrane segment spans residues 262–282 (LIILSQVMGMAYPSCHSCILI). Cholesterol is bound by residues Leu265 and Val268. Topologically, residues 283-317 (LGNKKLRQASLSVLWWLKYRFKDGEPSGHKGFRES) are cytoplasmic.

The protein belongs to the G-protein coupled receptor T2R family. As to quaternary structure, core component of the TAS2R14-GNAI1 complex, consisting of TAS2R14, GNAI1, GNB1 and GNG2; within the complex interacts with GNAI1. Core component of the TAS2R14-GNAT3 complex, consisting of TAS2R14, GNAT3, GNB1 and GNG2; within the complex interacts with GNAT3. Core component of the TAS2R14-GNAS2 complex, consisting of TAS2R14, GNAS2, GNB1 and GNG2; within the complex interacts with GNAS2.

The protein localises to the membrane. It carries out the reaction Ca(2+)(in) = Ca(2+)(out). It catalyses the reaction 3',5'-cyclic AMP(in) = 3',5'-cyclic AMP(out). Its activity is regulated as follows. Basal activity is enhanced by binding to bitter tastants, such as flufenamic acid and aristolochic acid. Regulated by cholesterol in a concentration-dependent manner. In terms of biological role, gustducin-linked G-protein coupled receptor that plays a role in the perception of bitterness. The activity of this receptor stimulates GNAT3, activating the gustducin G-protein pathway. Likely plays a role in sensing the chemical composition of the gastrointestinal content and other extra-oral tissues via the inhibitory G-protein pathways. The chain is Taste receptor type 2 member 14 (TAS2R14) from Pongo pygmaeus (Bornean orangutan).